A 474-amino-acid polypeptide reads, in one-letter code: Aspartyl/glutamyl-tRNA(Asn/Gln) amidotransferase subunit B (474 aa).

Belongs to the GatB/GatE family. GatB subfamily. As to quaternary structure, heterotrimer of A, B and C subunits.

The catalysed reaction is L-glutamyl-tRNA(Gln) + L-glutamine + ATP + H2O = L-glutaminyl-tRNA(Gln) + L-glutamate + ADP + phosphate + H(+). The enzyme catalyses L-aspartyl-tRNA(Asn) + L-glutamine + ATP + H2O = L-asparaginyl-tRNA(Asn) + L-glutamate + ADP + phosphate + 2 H(+). Its function is as follows. Allows the formation of correctly charged Asn-tRNA(Asn) or Gln-tRNA(Gln) through the transamidation of misacylated Asp-tRNA(Asn) or Glu-tRNA(Gln) in organisms which lack either or both of asparaginyl-tRNA or glutaminyl-tRNA synthetases. The reaction takes place in the presence of glutamine and ATP through an activated phospho-Asp-tRNA(Asn) or phospho-Glu-tRNA(Gln). The chain is Aspartyl/glutamyl-tRNA(Asn/Gln) amidotransferase subunit B from Helicobacter hepaticus (strain ATCC 51449 / 3B1).